The primary structure comprises 307 residues: Homoserine O-acetyltransferase (307 aa).

The Acyl-thioester intermediate role is filled by Cys-142. Lys-163 and Ser-192 together coordinate substrate. His-235 functions as the Proton acceptor in the catalytic mechanism. Residue Glu-237 is part of the active site. Arg-249 lines the substrate pocket.

Belongs to the MetA family.

The protein localises to the cytoplasm. It catalyses the reaction L-homoserine + acetyl-CoA = O-acetyl-L-homoserine + CoA. Its pathway is amino-acid biosynthesis; L-methionine biosynthesis via de novo pathway; O-acetyl-L-homoserine from L-homoserine: step 1/1. Functionally, transfers an acetyl group from acetyl-CoA to L-homoserine, forming acetyl-L-homoserine. The chain is Homoserine O-acetyltransferase from Sinorhizobium fredii (strain NBRC 101917 / NGR234).